The following is a 294-amino-acid chain: 4-hydroxy-tetrahydrodipicolinate synthase (294 aa).

Thr46 contacts pyruvate. Residue Tyr134 is the Proton donor/acceptor of the active site. The Schiff-base intermediate with substrate role is filled by Lys163. Residue Ile205 participates in pyruvate binding.

Belongs to the DapA family. In terms of assembly, homotetramer; dimer of dimers.

It is found in the cytoplasm. The catalysed reaction is L-aspartate 4-semialdehyde + pyruvate = (2S,4S)-4-hydroxy-2,3,4,5-tetrahydrodipicolinate + H2O + H(+). The protein operates within amino-acid biosynthesis; L-lysine biosynthesis via DAP pathway; (S)-tetrahydrodipicolinate from L-aspartate: step 3/4. Its function is as follows. Catalyzes the condensation of (S)-aspartate-beta-semialdehyde [(S)-ASA] and pyruvate to 4-hydroxy-tetrahydrodipicolinate (HTPA). This is 4-hydroxy-tetrahydrodipicolinate synthase from Clostridium tetani (strain Massachusetts / E88).